The primary structure comprises 264 residues: S-adenosylmethionine decarboxylase proenzyme (264 aa).

S111 (schiff-base intermediate with substrate; via pyruvic acid) is an active-site residue. Position 111 is a pyruvic acid (Ser); by autocatalysis (S111). Residue H116 is the Proton acceptor; for processing activity of the active site. The active-site Proton donor; for catalytic activity is C139.

Belongs to the prokaryotic AdoMetDC family. Type 2 subfamily. As to quaternary structure, heterooctamer of four alpha and four beta chains arranged as a tetramer of alpha/beta heterodimers. Pyruvate is required as a cofactor. Is synthesized initially as an inactive proenzyme. Formation of the active enzyme involves a self-maturation process in which the active site pyruvoyl group is generated from an internal serine residue via an autocatalytic post-translational modification. Two non-identical subunits are generated from the proenzyme in this reaction, and the pyruvate is formed at the N-terminus of the alpha chain, which is derived from the carboxyl end of the proenzyme. The post-translation cleavage follows an unusual pathway, termed non-hydrolytic serinolysis, in which the side chain hydroxyl group of the serine supplies its oxygen atom to form the C-terminus of the beta chain, while the remainder of the serine residue undergoes an oxidative deamination to produce ammonia and the pyruvoyl group blocking the N-terminus of the alpha chain.

It carries out the reaction S-adenosyl-L-methionine + H(+) = S-adenosyl 3-(methylsulfanyl)propylamine + CO2. It participates in amine and polyamine biosynthesis; S-adenosylmethioninamine biosynthesis; S-adenosylmethioninamine from S-adenosyl-L-methionine: step 1/1. Functionally, catalyzes the decarboxylation of S-adenosylmethionine to S-adenosylmethioninamine (dcAdoMet), the propylamine donor required for the synthesis of the polyamines spermine and spermidine from the diamine putrescine. The protein is S-adenosylmethionine decarboxylase proenzyme of Geobacillus kaustophilus (strain HTA426).